Here is a 346-residue protein sequence, read N- to C-terminus: Phosphoribosylformylglycinamidine cyclo-ligase (346 aa).

It belongs to the AIR synthase family.

The protein resides in the cytoplasm. It catalyses the reaction 2-formamido-N(1)-(5-O-phospho-beta-D-ribosyl)acetamidine + ATP = 5-amino-1-(5-phospho-beta-D-ribosyl)imidazole + ADP + phosphate + H(+). It participates in purine metabolism; IMP biosynthesis via de novo pathway; 5-amino-1-(5-phospho-D-ribosyl)imidazole from N(2)-formyl-N(1)-(5-phospho-D-ribosyl)glycinamide: step 2/2. This chain is Phosphoribosylformylglycinamidine cyclo-ligase, found in Bacillus mycoides (strain KBAB4) (Bacillus weihenstephanensis).